The sequence spans 459 residues: MEPEILSIELIKPSSPTPRHLKTHKLCFLDQYRNHAYFPMVFFYSVTHDTNLNLSNETDIAQIVSVRLQLLKQSLPETLSLFYPFAGKIKDNLSIDCSDEGIYFTEARFKSPLKEFFNQQNFSCLTYKFVPFDAKELEGSISGLHVAKIQVTSFACGGIVICACLSHLFADGATLCSFLKCWVATACKNNEQRISPNNDASWLFPQNEAYPKEGTWLAMCPRFFGHGRFVTRRFVFDAKAIATIKAKASSSTRVQNPTPTRVEAVSALFSKCVMAAFKAKHGSHKTTLLTHSVNLRNKAKSILSEYSMGNIVWNANALCTNEEAELDLEGLVCKLREAMMKINGDFVKSLLGDEGFLNLCQAIKDENGVCSKAKERINFSSWCNFGLYDIDFGWGKPMWVSVIGLDGKLPYFSSTIILLDTRFGDGIEAWVYLLEEDMNTLELDKELLALATLDPCPLW.

Catalysis depends on proton acceptor residues histidine 167 and aspartate 391.

Belongs to the plant acyltransferase family. In terms of assembly, monomer. As to expression, expressed in maturing fruits and in juice vesicles.

The enzyme catalyses (1S)-1-acetoxy-luvungin A + acetyl-CoA = (1S)-1,7-diacetoxy-luvungin A + CoA. It functions in the pathway secondary metabolite biosynthesis; terpenoid biosynthesis. In terms of biological role, acetyltransferase involved in the biosynthesis of limonoids triterpene natural products such as limonin, a compound with insecticidal activity responsible for the bitter taste in citrus. Catalyzes the formation of (1S)-1,7-diacetoxy-luvungin A from (1S)-1-acetoxy-luvungin A. This chain is Limonoid 7-O-acetyltransferse, found in Citrus sinensis (Sweet orange).